Reading from the N-terminus, the 448-residue chain is tRNA modification GTPase MnmE (448 aa).

(6S)-5-formyl-5,6,7,8-tetrahydrofolate contacts are provided by Arg-24, Glu-81, and Lys-120. Residues 216 to 373 form the TrmE-type G domain; sequence GLNVVLVGAP…LKRTLLCEAG (158 aa). Asn-226 provides a ligand contact to K(+). GTP is bound by residues 226–231, 245–251, and 270–273; these read NVGKSS, TDIAGTT, and DTAG. Ser-230 provides a ligand contact to Mg(2+). Positions 245, 247, and 250 each coordinate K(+). Thr-251 lines the Mg(2+) pocket. Residue Lys-448 participates in (6S)-5-formyl-5,6,7,8-tetrahydrofolate binding.

Belongs to the TRAFAC class TrmE-Era-EngA-EngB-Septin-like GTPase superfamily. TrmE GTPase family. Homodimer. Heterotetramer of two MnmE and two MnmG subunits. K(+) serves as cofactor.

The protein localises to the cytoplasm. In terms of biological role, exhibits a very high intrinsic GTPase hydrolysis rate. Involved in the addition of a carboxymethylaminomethyl (cmnm) group at the wobble position (U34) of certain tRNAs, forming tRNA-cmnm(5)s(2)U34. The polypeptide is tRNA modification GTPase MnmE (Neisseria gonorrhoeae (strain ATCC 700825 / FA 1090)).